Reading from the N-terminus, the 318-residue chain is Mitochondrial coenzyme A transporter SLC25A42 (318 aa).

3 Solcar repeats span residues 31-117 (RQVL…YKRI), 129-214 (LPPW…LKSL), and 224-312 (PYPF…MQIL). The next 6 membrane-spanning stretches (helical) occupy residues 33 to 53 (VLSS…AVAP), 89 to 109 (LWRG…IQFS), 135 to 155 (LLAG…LDLV), 186 to 206 (LYFG…LSFF), 230 to 250 (MVFG…LDVV), and 293 to 313 (LKGP…QILL).

Belongs to the mitochondrial carrier (TC 2.A.29) family.

The protein resides in the mitochondrion inner membrane. It catalyses the reaction ADP(out) + CoA(in) = ADP(in) + CoA(out). The catalysed reaction is 3'-dephospho-CoA(in) + ADP(out) = 3'-dephospho-CoA(out) + ADP(in). The enzyme catalyses adenosine 3',5'-bisphosphate(in) + ADP(out) = adenosine 3',5'-bisphosphate(out) + ADP(in). It carries out the reaction AMP(in) + ADP(out) = AMP(out) + ADP(in). It catalyses the reaction dADP(in) + ADP(out) = dADP(out) + ADP(in). The catalysed reaction is ADP(in) + ATP(out) = ADP(out) + ATP(in). Its function is as follows. Mitochondrial carrier mediating the transport of coenzyme A (CoA) in mitochondria in exchange for intramitochondrial (deoxy)adenine nucleotides and adenosine 3',5'-diphosphate. This Mus musculus (Mouse) protein is Mitochondrial coenzyme A transporter SLC25A42 (Slc25a42).